The primary structure comprises 343 residues: Uroporphyrinogen decarboxylase (343 aa).

Substrate-binding positions include 23 to 27 (RQAGR), aspartate 73, tyrosine 151, serine 206, and histidine 319.

It belongs to the uroporphyrinogen decarboxylase family. As to quaternary structure, homodimer.

The protein resides in the cytoplasm. It carries out the reaction uroporphyrinogen III + 4 H(+) = coproporphyrinogen III + 4 CO2. The protein operates within porphyrin-containing compound metabolism; protoporphyrin-IX biosynthesis; coproporphyrinogen-III from 5-aminolevulinate: step 4/4. Its function is as follows. Catalyzes the decarboxylation of four acetate groups of uroporphyrinogen-III to yield coproporphyrinogen-III. This Sulfurimonas denitrificans (strain ATCC 33889 / DSM 1251) (Thiomicrospira denitrificans (strain ATCC 33889 / DSM 1251)) protein is Uroporphyrinogen decarboxylase.